The primary structure comprises 457 residues: MKVERRTIEYIPNEERHGKAKDLFPVWFGANMHITTLVTGTIPVAMGLNLFWSVAAIICGTLIGAIFMASHSAQGPQLGIPQMIQSRAQFGVIGAILPLFLVMFIYLGFFASSTILAAGTLSSFVPIPGSWSIIGLSAVCFLLTIFGHDLIHKMQKILSWTSFAVFFAATILIFQLPIPAGSWIPGAIDLPIFLVAVSAVATWQLAYAPYVADYSRYLPVKTPASKTFWYSYAGTSVSSIWMMLLGALLTTSLPDFTANSGSQIVQLFGPFSFIMLIIVLFGQMAINVFNLYGAFMSTTTTLEPFLKLKVTPKVRIIMILGVTLVGTVLSLLGQSNFMELFLNFIFFISYFLIPWTAINLVDYYFVRHGKYQVKAMFDVNGPYGKVNWITTIAFVLSILLEIPFINTSFYIGPLAKMFGGGDIAWIIGLAVPSVLYYVLMKPRLKKRAGYQEKLSSL.

12 helical membrane passes run Phe24–Val44, Leu50–Ser70, Phe90–Phe110, Ile127–Gly147, Ala164–Ile184, Ile192–Ala212, Phe228–Leu248, Ile264–Met284, Ile316–Asn336, Phe341–Val361, Ile392–Gly412, and Gly420–Met440.

This sequence belongs to the purine-cytosine permease (2.A.39) family.

Its subcellular location is the cell membrane. The protein is Putative purine-cytosine permease YxlA (yxlA) of Bacillus subtilis (strain 168).